The following is a 238-amino-acid chain: MATPHINAEMGDFADVVLMPGDPLRAKYIAETFLENVRQVNDVRGMLGFTGTYKGRPISVMGHGMGIPSCSIYAKELITDFGAKVLIRVGSCGSVRHDVKLRDVVIGMGACTDSKVNRIRFKDHDFAAIADFDLVRNAVDAAKAKNINVRVGNIFSVELFYTPDPQLFDIMEKYGILGVEMEAAGFYGVAAEYGAKALTICTVSDHIRTHEKLTAEERQTTFNEMIEIALESVLLGDK.

His5 provides a ligand contact to a purine D-ribonucleoside. Phosphate-binding positions include Gly21, Arg25, Arg44, and 88-91 (RVGS). A purine D-ribonucleoside-binding positions include 180–182 (EME) and 204–205 (SD). Asp205 functions as the Proton donor in the catalytic mechanism.

Belongs to the PNP/UDP phosphorylase family. In terms of assembly, homohexamer; trimer of homodimers.

The enzyme catalyses a purine D-ribonucleoside + phosphate = a purine nucleobase + alpha-D-ribose 1-phosphate. It catalyses the reaction a purine 2'-deoxy-D-ribonucleoside + phosphate = a purine nucleobase + 2-deoxy-alpha-D-ribose 1-phosphate. Functionally, catalyzes the reversible phosphorolytic breakdown of the N-glycosidic bond in the beta-(deoxy)ribonucleoside molecules, with the formation of the corresponding free purine bases and pentose-1-phosphate. In Photorhabdus laumondii subsp. laumondii (strain DSM 15139 / CIP 105565 / TT01) (Photorhabdus luminescens subsp. laumondii), this protein is Purine nucleoside phosphorylase DeoD-type.